We begin with the raw amino-acid sequence, 466 residues long: Cysteine--tRNA ligase (466 aa).

Cys28 is a Zn(2+) binding site. The 'HIGH' region motif lies at 30–40 (PTVYNYIHIGN). Positions 208, 233, and 237 each coordinate Zn(2+). The 'KMSKS' region motif lies at 265 to 269 (KMSKS). Lys268 provides a ligand contact to ATP.

Belongs to the class-I aminoacyl-tRNA synthetase family. Monomer. The cofactor is Zn(2+).

The protein localises to the cytoplasm. The catalysed reaction is tRNA(Cys) + L-cysteine + ATP = L-cysteinyl-tRNA(Cys) + AMP + diphosphate. The chain is Cysteine--tRNA ligase from Staphylococcus carnosus (strain TM300).